The sequence spans 270 residues: Cell surface glycoprotein CD200 receptor 5 (270 aa).

An N-terminal signal peptide occupies residues 1 to 25 (MHALGRTPALTLLIFINIFVSGSRC). Topologically, residues 26–241 (TDKNQTIQND…STTTTTSLLT (216 aa)) are extracellular. The Ig-like V-type domain occupies 39–145 (PLTQVNTTVS…GNFGRVYDLQ (107 aa)). N-linked (GlcNAc...) asparagine glycosylation occurs at asparagine 44. 2 disulfides stabilise this stretch: cysteine 59–cysteine 129 and cysteine 164–cysteine 213. In terms of domain architecture, Ig-like C2-type spans 134–229 (PEGNFGRVYD…GNKSLFIELN (96 aa)). N-linked (GlcNAc...) asparagine glycans are attached at residues asparagine 192 and asparagine 221. A helical transmembrane segment spans residues 242-262 (ILYVKMVLLGIILLHVGFAFF). Residues 263-270 (QKRNVIRT) are Cytoplasmic-facing.

This sequence belongs to the CD200R family.

The protein localises to the membrane. Functionally, may not be a receptor for the CD200/OX2 cell surface glycoprotein. This Mus musculus (Mouse) protein is Cell surface glycoprotein CD200 receptor 5 (Cd200r5).